The chain runs to 468 residues: uncharacterized protein (468 aa).

The next 6 helical transmembrane spans lie at 59 to 79 (IPIVIIAVIYSSFIFFFALFI), 135 to 155 (TWINSILEILALIYSFLLLLV), 215 to 235 (VFPFTPCPLPLLLFPIFLSIL), 297 to 317 (THCCLNVFASSAFFVLLMVLV), 348 to 368 (HFIPLILTVVIELVITGLVSY), and 385 to 405 (VFTVMFTIIAVFRFVFIIILF).

It localises to the membrane. This is an uncharacterized protein from Caenorhabditis elegans.